We begin with the raw amino-acid sequence, 88 residues long: UPF0297 protein SPCG_0205 (88 aa).

Belongs to the UPF0297 family.

This is UPF0297 protein SPCG_0205 from Streptococcus pneumoniae (strain CGSP14).